Here is a 504-residue protein sequence, read N- to C-terminus: Maturase K (504 aa).

This sequence belongs to the intron maturase 2 family. MatK subfamily.

It is found in the plastid. The protein localises to the chloroplast. Functionally, usually encoded in the trnK tRNA gene intron. Probably assists in splicing its own and other chloroplast group II introns. The chain is Maturase K from Lobularia maritima (Sweet alyssum).